We begin with the raw amino-acid sequence, 429 residues long: Glutamate-1-semialdehyde 2,1-aminomutase 1 (429 aa).

K267 is subject to N6-(pyridoxal phosphate)lysine.

The protein belongs to the class-III pyridoxal-phosphate-dependent aminotransferase family. HemL subfamily. Homodimer. Pyridoxal 5'-phosphate serves as cofactor.

The protein localises to the cytoplasm. It catalyses the reaction (S)-4-amino-5-oxopentanoate = 5-aminolevulinate. It functions in the pathway porphyrin-containing compound metabolism; protoporphyrin-IX biosynthesis; 5-aminolevulinate from L-glutamyl-tRNA(Glu): step 2/2. The polypeptide is Glutamate-1-semialdehyde 2,1-aminomutase 1 (Bacillus velezensis (strain DSM 23117 / BGSC 10A6 / LMG 26770 / FZB42) (Bacillus amyloliquefaciens subsp. plantarum)).